A 3434-amino-acid polypeptide reads, in one-letter code: Genome polyprotein (3434 aa).

The interval 2–15 (SKKPGGPGKPRVVN) is interaction with host EXOC1. Residues 2 to 110 (SKKPGGPGKP…KQKKRGGSET (109 aa)) are Cytoplasmic-facing. Residues 37–72 (LLDGRGPIRFVLALLAFFRFTALAPTKALMRRWKSV) form a hydrophobic; homodimerization of capsid protein C region. Positions 106 to 125 (GGSETSVLMLIFMLIGFAAA) are cleaved as a propeptide — ER anchor for the capsid protein C, removed in mature form by serine protease NS3. Residues 111 to 131 (SVLMLIFMLIGFAAALKLSTF) form a helical membrane-spanning segment. Residues 132-251 (QGKIMMTVNA…ATRYLTKTEN (120 aa)) are Extracellular-facing. N-linked (GlcNAc...) asparagine; by host glycosylation occurs at asparagine 140. The helical transmembrane segment at 252-272 (WIIRNPGYALVAVVLGWMLGS) threads the bilayer. The Cytoplasmic portion of the chain corresponds to 273–277 (NTGQK). A helical transmembrane segment spans residues 278–292 (VIFTVLLLLVAPAYS). At 293–745 (FNCLGMSSRD…QVFGGAFRTL (453 aa)) the chain is on the extracellular side. 6 cysteine pairs are disulfide-bonded: cysteine 295–cysteine 322, cysteine 352–cysteine 408, cysteine 352–cysteine 413, cysteine 366–cysteine 397, cysteine 384–cysteine 408, and cysteine 384–cysteine 413. Residues 390-403 (DRGWGNGCGLFGKG) are fusion peptide. A glycan (N-linked (GlcNAc...) asparagine; by host) is linked at asparagine 446. 2 disulfide bridges follow: cysteine 482–cysteine 580 and cysteine 597–cysteine 628. Residues 746–766 (FGGMSWISPGLLGALLLWMGV) traverse the membrane as a helical segment. At 767–772 (NARDKS) the chain is on the cytoplasmic side. The chain crosses the membrane as a helical span at residues 773 to 793 (IALAFLATGGVLLFLATNVHA). Topologically, residues 794-1218 (DTGCAIDITR…AFAESNNGGD (425 aa)) are extracellular. Cystine bridges form between cysteine 797/cysteine 808 and cysteine 848/cysteine 936. N-linked (GlcNAc...) asparagine; by host glycans are attached at residues asparagine 923 and asparagine 968. 4 cysteine pairs are disulfide-bonded: cysteine 972–cysteine 1016, cysteine 1073–cysteine 1122, cysteine 1084–cysteine 1105, and cysteine 1106–cysteine 1109. Residue asparagine 1000 is glycosylated (N-linked (GlcNAc...) (high mannose) asparagine; by host). Residues 1219–1239 (VIHLALIAVFKVQPAFLVASL) form a helical membrane-spanning segment. Over 1240–1249 (TRSRWTNQEN) the chain is Cytoplasmic. A helical membrane pass occupies residues 1250–1270 (LVLVLGAAFFQMAASDLELTI). At 1271-1286 (PGLLNSAATAWMVLRA) the chain is on the lumenal side. The chain crosses the membrane as a helical span at residues 1287 to 1307 (MAFPSTSAIAMPMLAMLAPGM). Residue arginine 1308 is a topological domain, cytoplasmic. A helical transmembrane segment spans residues 1309–1329 (MLHLDTYRIVLLLIGICSLLN). The Lumenal segment spans residues 1330–1340 (ERRRSVEKKKG). A helical transmembrane segment spans residues 1341-1361 (AVLIGLALTSTGYFSPTIMAA). Residues 1362–1373 (GLMICNPNKKRG) are Cytoplasmic-facing. A helical transmembrane segment spans residues 1374 to 1394 (WPATEVLTAVGLMFAIVGGLA). Topologically, residues 1395-1397 (ELD) are lumenal. A helical transmembrane segment spans residues 1398–1418 (IDSMSVPFTIAGLMLVSYVIS). Residues 1419–1475 (GKATDMWLERAADVSWEAGAAITGTSERLDVQLDDDGDFHLLNDPGVPWKIWVLRMT) lie on the Cytoplasmic side of the membrane. Residues 1426–1465 (LERAADVSWEAGAAITGTSERLDVQLDDDGDFHLLNDPGV) form an interacts with and activates NS3 protease region. The segment at residues 1476 to 1496 (CLSVAAITPRAILPSAFGYWL) is an intramembrane region (helical). The Cytoplasmic portion of the chain corresponds to 1497–2172 (TLKYTKRGGV…RMALEELPDA (676 aa)). Positions 1504 to 1681 (GGVFWDTPSP…ERVEEPVPEA (178 aa)) constitute a Peptidase S7 domain. Residues histidine 1554, aspartate 1578, and serine 1638 each act as charge relay system; for serine protease NS3 activity in the active site. Residues 1684 to 1840 (PEMLKKRQLT…DTNSPVHDVS (157 aa)) enclose the Helicase ATP-binding domain. The important for RNA-binding stretch occupies residues 1688–1691 (KKRQ). An ATP-binding site is contributed by 1697–1704 (LHPGAGKT). The short motif at 1788-1791 (DEAH) is the DEAH box element. Residues 1851–2016 (GFEWITDYAG…GLVAQLYGPE (166 aa)) enclose the Helicase C-terminal domain. Position 1892 is an N6-acetyllysine; by host (lysine 1892). The interval 1958 to 1979 (AAQRRGRVGRNPSQIGDEYHYG) is disordered. The tract at residues 2167–2171 (EELPD) is regulates the ATPase activity of NS3 helicase. Residues 2173–2193 (LETITLIAALGVMTAGFFLLM) traverse the membrane as a helical segment. Residues 2194-2197 (MQRK) lie on the Lumenal side of the membrane. The segment at residues 2198–2218 (GIGKLGLGALVLVVATFFLWM) is an intramembrane region (helical). The Lumenal segment spans residues 2219–2220 (SD). A helical transmembrane segment spans residues 2221 to 2241 (VSGTKIAGVLLLALLMMVVLI). Residues 2242-2256 (PEPEKQRSQTDNQLA) lie on the Cytoplasmic side of the membrane. The helical transmembrane segment at 2257 to 2271 (VFLICVLLVVGLVAA) threads the bilayer. The Lumenal portion of the chain corresponds to 2272 to 2309 (NEYGMLERTKTDIRNLFGKSLIEENEVHIPPFDFFTLD). Positions 2310-2330 (LKPATAWALYGGSTVVLTPLI) form an intramembrane region, helical. Over 2331-2366 (KHLVTSQYVTTSLASINAQAGSLFTLPKGIPFTDFD) the chain is Lumenal. A helical transmembrane segment spans residues 2367–2394 (LSVALVFLGCWGQVTLTTLIMATILVTL). At 2395-2446 (HYGYLLPGWQAEALRAAQKRTAAGIMKNAVVDGIVATDVPELERTTPQMQKR) the chain is on the cytoplasmic side. A helical transmembrane segment spans residues 2447 to 2467 (LGQILLVLASVAAVCVNPRIT). Residues 2468–2498 (TIREAGILCTAAALTLWDNNASAAWNSTTAT) are Lumenal-facing. Residues 2499–2519 (GLCHVMRGSWIAGASIAWTLI) form a helical membrane-spanning segment. Residues 2520–3434 (KNAEKPAFKR…ETHVSEDRVL (915 aa)) lie on the Cytoplasmic side of the membrane. The 266-residue stretch at 2530–2795 (GRAGGRTLGE…DVNLGSGTRA (266 aa)) folds into the mRNA cap 0-1 NS5-type MT domain. An S-adenosyl-L-methionine-binding site is contributed by serine 2585. The residue at position 2585 (serine 2585) is a Phosphoserine. Lysine 2590 (for 2'-O-MTase activity) is an active-site residue. S-adenosyl-L-methionine-binding residues include glycine 2615, tryptophan 2616, threonine 2633, lysine 2634, aspartate 2660, and valine 2661. The For 2'-O-MTase activity role is filled by aspartate 2675. Isoleucine 2676 lines the S-adenosyl-L-methionine pocket. Active-site for 2'-O-MTase activity residues include lysine 2711 and glutamate 2747. Tyrosine 2749 serves as a coordination point for S-adenosyl-L-methionine. Zn(2+) contacts are provided by glutamate 2969, histidine 2973, cysteine 2978, and cysteine 2981. A RdRp catalytic domain is found at 3059–3211 (GKIYADDTAG…KPLDDRFSTA (153 aa)). Zn(2+) is bound by residues histidine 3246, cysteine 3262, and cysteine 3381.

In the N-terminal section; belongs to the class I-like SAM-binding methyltransferase superfamily. mRNA cap 0-1 NS5-type methyltransferase family. In terms of assembly, homodimer. Interacts (via N-terminus) with host EXOC1 (via C-terminus); this interaction results in EXOC1 degradation through the proteasome degradation pathway. As to quaternary structure, forms heterodimers with envelope protein E in the endoplasmic reticulum and Golgi. Homodimer; in the endoplasmic reticulum and Golgi. Interacts with protein prM. Interacts with non-structural protein 1. In terms of assembly, homodimer; Homohexamer when secreted. Interacts with envelope protein E. NS1 interacts with NS4B. Interacts with host complement protein CFH; this interaction leads to the degradation of C3. As to quaternary structure, interacts (via N-terminus) with serine protease NS3. Forms a heterodimer with serine protease NS3. May form homooligomers. In terms of assembly, forms a heterodimer with NS2B. Interacts with non-structural protein 2A (via N-terminus). Interacts with NS4B. Interacts with unphosphorylated RNA-directed RNA polymerase NS5; this interaction stimulates RNA-directed RNA polymerase NS5 guanylyltransferase activity. As to quaternary structure, interacts with serine protease NS3. Homodimer. Interacts with host STAT2; this interaction inhibits the phosphorylation of the latter, and, when all viral proteins are present (polyprotein), targets STAT2 for degradation. Interacts with serine protease NS3. Specific enzymatic cleavages in vivo yield mature proteins. Cleavages in the lumen of endoplasmic reticulum are performed by host signal peptidase, whereas cleavages in the cytoplasmic side are performed by serine protease NS3. Signal cleavage at the 2K-4B site requires a prior NS3 protease-mediated cleavage at the 4A-2K site. Post-translationally, cleaved in post-Golgi vesicles by a host furin, releasing the mature small envelope protein M, and peptide pr. This cleavage is incomplete as up to 30% of viral particles still carry uncleaved prM. In terms of processing, N-glycosylated. N-glycosylated. The excreted form is glycosylated and this is required for efficient secretion of the protein from infected cells. Post-translationally, acetylated by host KAT5. Acetylation modulates NS3 RNA-binding and unwinding activities and plays an important positive role for viral replication. In terms of processing, phosphorylated on serines residues. This phosphorylation may trigger NS5 nuclear localization.

Its subcellular location is the virion. The protein localises to the host nucleus. The protein resides in the host cytoplasm. It is found in the host perinuclear region. It localises to the secreted. Its subcellular location is the virion membrane. The protein localises to the host endoplasmic reticulum membrane. The enzyme catalyses Selective hydrolysis of -Xaa-Xaa-|-Yaa- bonds in which each of the Xaa can be either Arg or Lys and Yaa can be either Ser or Ala.. The catalysed reaction is RNA(n) + a ribonucleoside 5'-triphosphate = RNA(n+1) + diphosphate. It catalyses the reaction a ribonucleoside 5'-triphosphate + H2O = a ribonucleoside 5'-diphosphate + phosphate + H(+). It carries out the reaction ATP + H2O = ADP + phosphate + H(+). The enzyme catalyses a 5'-end (5'-triphosphoguanosine)-ribonucleoside in mRNA + S-adenosyl-L-methionine = a 5'-end (N(7)-methyl 5'-triphosphoguanosine)-ribonucleoside in mRNA + S-adenosyl-L-homocysteine. The catalysed reaction is a 5'-end (N(7)-methyl 5'-triphosphoguanosine)-ribonucleoside in mRNA + S-adenosyl-L-methionine = a 5'-end (N(7)-methyl 5'-triphosphoguanosine)-(2'-O-methyl-ribonucleoside) in mRNA + S-adenosyl-L-homocysteine + H(+). In terms of biological role, plays a role in virus budding by binding to the cell membrane and gathering the viral RNA into a nucleocapsid that forms the core of a mature virus particle. During virus entry, may induce genome penetration into the host cytoplasm after hemifusion induced by the surface proteins. Can migrate to the cell nucleus where it modulates host functions. Overcomes the anti-viral effects of host EXOC1 by sequestering and degrading the latter through the proteasome degradation pathway. Functionally, inhibits RNA silencing by interfering with host Dicer. Its function is as follows. Prevents premature fusion activity of envelope proteins in trans-Golgi by binding to envelope protein E at pH6.0. After virion release in extracellular space, gets dissociated from E dimers. Acts as a chaperone for envelope protein E during intracellular virion assembly by masking and inactivating envelope protein E fusion peptide. prM is the only viral peptide matured by host furin in the trans-Golgi network probably to avoid catastrophic activation of the viral fusion activity in acidic Golgi compartment prior to virion release. prM-E cleavage is inefficient, and many virions are only partially matured. These uncleaved prM would play a role in immune evasion. In terms of biological role, may play a role in virus budding. Exerts cytotoxic effects by activating a mitochondrial apoptotic pathway through M ectodomain. May display a viroporin activity. Functionally, binds to host cell surface receptor and mediates fusion between viral and cellular membranes. Envelope protein is synthesized in the endoplasmic reticulum in the form of heterodimer with protein prM. They play a role in virion budding in the ER, and the newly formed immature particle is covered with 60 spikes composed of heterodimer between precursor prM and envelope protein E. The virion is transported to the Golgi apparatus where the low pH causes dissociation of PrM-E heterodimers and formation of E homodimers. prM-E cleavage is inefficient, and many virions are only partially matured. These uncleaved prM would play a role in immune evasion. Its function is as follows. Involved in immune evasion, pathogenesis and viral replication. Once cleaved off the polyprotein, is targeted to three destinations: the viral replication cycle, the plasma membrane and the extracellular compartment. Essential for viral replication. Required for formation of the replication complex and recruitment of other non-structural proteins to the ER-derived membrane structures. Excreted as a hexameric lipoparticle that plays a role against host immune response. Antagonizing the complement function. Binds to the host macrophages and dendritic cells. Inhibits signal transduction originating from Toll-like receptor 3 (TLR3). Component of the viral RNA replication complex that functions in virion assembly and antagonizes the host alpha/beta interferon antiviral response. In terms of biological role, required cofactor for the serine protease function of NS3. May have membrane-destabilizing activity and form viroporins. Functionally, displays three enzymatic activities: serine protease, NTPase and RNA helicase. NS3 serine protease, in association with NS2B, performs its autocleavage and cleaves the polyprotein at dibasic sites in the cytoplasm: C-prM, NS2A-NS2B, NS2B-NS3, NS3-NS4A, NS4A-2K and NS4B-NS5. NS3 RNA helicase binds RNA and unwinds dsRNA in the 3' to 5' direction. Its function is as follows. Regulates the ATPase activity of the NS3 helicase activity. NS4A allows NS3 helicase to conserve energy during unwinding. Functions as a signal peptide for NS4B and is required for the interferon antagonism activity of the latter. In terms of biological role, induces the formation of ER-derived membrane vesicles where the viral replication takes place. Inhibits interferon (IFN)-induced host STAT1 phosphorylation and nuclear translocation, thereby preventing the establishment of cellular antiviral state by blocking the IFN-alpha/beta pathway. Inhibits STAT2 translocation in the nucleus after IFN-alpha treatment. Functionally, replicates the viral (+) and (-) RNA genome, and performs the capping of genomes in the cytoplasm. NS5 methylates viral RNA cap at guanine N-7 and ribose 2'-O positions. Besides its role in RNA genome replication, also prevents the establishment of cellular antiviral state by blocking the interferon-alpha/beta (IFN-alpha/beta) signaling pathway. Inhibits host TYK2 and STAT2 phosphorylation, thereby preventing activation of JAK-STAT signaling pathway. In Culex annulirostris (Common banded mosquito), this protein is Genome polyprotein.